Here is a 574-residue protein sequence, read N- to C-terminus: Alpha-mannosidase I MNS5 (574 aa).

Residues 1 to 9 (MSCPIHPRR) lie on the Cytoplasmic side of the membrane. A helical; Signal-anchor for type II membrane protein membrane pass occupies residues 10 to 26 (LFLCLLISLTFFVVDPS). Over 27–574 (SQHIEVKKKQ…VGYCGLWNPL (548 aa)) the chain is Lumenal. Residues N89, N107, and N121 are each glycosylated (N-linked (GlcNAc...) asparagine). Catalysis depends on E134, which acts as the Proton donor. The N-linked (GlcNAc...) asparagine glycan is linked to N201. The active site involves D274. N-linked (GlcNAc...) asparagine glycosylation is present at N349. E367 serves as the catalytic Proton donor. Residue E388 is part of the active site. Ca(2+) is bound at residue T471. N494 carries an N-linked (GlcNAc...) asparagine glycan.

Belongs to the glycosyl hydrolase 47 family. Ca(2+) is required as a cofactor.

It localises to the endoplasmic reticulum membrane. Its pathway is protein modification; protein glycosylation. Its function is as follows. Can convert Man(9)GlcNAc(2) and Man(8)GlcNAc(2) into N-glycans with a terminal alpha-1,6-linked Man residue in the C-branch. Functions in the formation of unique N-glycan structures that are specifically recognized by components of the endoplasmic reticulum-associated degradation (ERAD) machinery, which leads to the degradation of misfolded glycoproteins. Most likely generates N-glycan signal on misfolded glycoproteins that is subsequently recognized by OS9. Required for ERAD of the heavily glycosylated and misfolded BRI1 variants BRI1-5 and BRI1-9. Does not seem to play role in N-glycan processing of correctly folded proteins destined for secretion. This chain is Alpha-mannosidase I MNS5 (MNS5), found in Arabidopsis thaliana (Mouse-ear cress).